Consider the following 63-residue polypeptide: Chromatin protein Cren7 (63 aa).

It belongs to the Cren7 family. As to quaternary structure, monomer. In terms of processing, methylated at multiple sites, to varying extents.

It is found in the chromosome. It localises to the cytoplasm. In terms of biological role, a chromatin protein, binds double-stranded DNA without sequence specificity. Constrains negative DNA supercoils. The polypeptide is Chromatin protein Cren7 (Pyrobaculum calidifontis (strain DSM 21063 / JCM 11548 / VA1)).